We begin with the raw amino-acid sequence, 299 residues long: tRNA pseudouridine synthase B (299 aa).

D47 acts as the Nucleophile in catalysis.

This sequence belongs to the pseudouridine synthase TruB family. Type 1 subfamily.

The enzyme catalyses uridine(55) in tRNA = pseudouridine(55) in tRNA. In terms of biological role, responsible for synthesis of pseudouridine from uracil-55 in the psi GC loop of transfer RNAs. The polypeptide is tRNA pseudouridine synthase B (Dechloromonas aromatica (strain RCB)).